Reading from the N-terminus, the 88-residue chain is Small ribosomal subunit protein uS15 (88 aa).

This sequence belongs to the universal ribosomal protein uS15 family. In terms of assembly, part of the 30S ribosomal subunit. Forms a bridge to the 50S subunit in the 70S ribosome, contacting the 23S rRNA.

Its function is as follows. One of the primary rRNA binding proteins, it binds directly to 16S rRNA where it helps nucleate assembly of the platform of the 30S subunit by binding and bridging several RNA helices of the 16S rRNA. Forms an intersubunit bridge (bridge B4) with the 23S rRNA of the 50S subunit in the ribosome. In Mycoplasmopsis synoviae (strain 53) (Mycoplasma synoviae), this protein is Small ribosomal subunit protein uS15.